The primary structure comprises 31 residues: Toxin BmKK16 (31 aa).

Gln-1 is modified (pyrrolidone carboxylic acid). Intrachain disulfides connect Cys-4–Cys-20, Cys-10–Cys-25, and Cys-14–Cys-27. Pro-31 carries the proline amide modification.

The protein belongs to the short scorpion toxin superfamily. Potassium channel inhibitor family. Alpha-KTx 17 subfamily. Post-translationally, the N-terminus is blocked. Expressed by the venom gland.

The protein resides in the secreted. In terms of biological role, blocker of potassium channels (Kv). This is Toxin BmKK16 from Olivierus martensii (Manchurian scorpion).